Consider the following 380-residue polypeptide: Histidinol-phosphate aminotransferase (380 aa).

Lys-235 carries the post-translational modification N6-(pyridoxal phosphate)lysine.

It belongs to the class-II pyridoxal-phosphate-dependent aminotransferase family. Histidinol-phosphate aminotransferase subfamily. In terms of assembly, homodimer. Pyridoxal 5'-phosphate is required as a cofactor.

It carries out the reaction L-histidinol phosphate + 2-oxoglutarate = 3-(imidazol-4-yl)-2-oxopropyl phosphate + L-glutamate. Its pathway is amino-acid biosynthesis; L-histidine biosynthesis; L-histidine from 5-phospho-alpha-D-ribose 1-diphosphate: step 7/9. The sequence is that of Histidinol-phosphate aminotransferase from Rhodococcus jostii (strain RHA1).